Reading from the N-terminus, the 199-residue chain is Dephospho-CoA kinase (199 aa).

Residues 11–199 enclose the DPCK domain; it reads RIGLTGGIAS…DLHDQLDALL (189 aa). 19 to 24 contacts ATP; the sequence is ASGKSS.

It belongs to the CoaE family.

The protein resides in the cytoplasm. The enzyme catalyses 3'-dephospho-CoA + ATP = ADP + CoA + H(+). It participates in cofactor biosynthesis; coenzyme A biosynthesis; CoA from (R)-pantothenate: step 5/5. In terms of biological role, catalyzes the phosphorylation of the 3'-hydroxyl group of dephosphocoenzyme A to form coenzyme A. In Synechococcus sp. (strain CC9902), this protein is Dephospho-CoA kinase.